Reading from the N-terminus, the 204-residue chain is Tumor necrosis factor alpha-induced protein 8-like protein 3 (204 aa).

The segment covering 1 to 10 has biased composition (acidic residues); that stretch reads MDSDSGEQSE. The tract at residues 1–20 is disordered; sequence MDSDSGEQSEGEPGTAAGPH. The segment at 21–204 is binding to phosphoinositides; the sequence is VFSSKNLALQ…INKLLDDKIL (184 aa).

This sequence belongs to the TNFAIP8 family. Widely expressed (at protein level).

Its subcellular location is the cytoplasm. It localises to the cell membrane. Acts as a lipid transfer protein. Preferentially captures and shuttles two lipid second messengers, i.e., phosphatidylinositol 4,5- bisphosphate and phosphatidylinositol 3,4,5-trisphosphate and increases their levels in the plasma membrane. Additionally, may also function as a lipid-presenting protein to enhance the activity of the PI3K-AKT and MEK-ERK pathways. May act as a regulator of tumorigenesis through its activation of phospholipid signaling. The polypeptide is Tumor necrosis factor alpha-induced protein 8-like protein 3 (Tnfaip8l3) (Mus musculus (Mouse)).